The primary structure comprises 519 residues: Dihydropyrimidinase (519 aa).

Residues histidine 67 and histidine 69 each contribute to the Zn(2+) site. Serine 79 carries the post-translational modification Phosphoserine. Lysine 159 lines the Zn(2+) pocket. Lysine 159 bears the N6-carboxylysine mark. Tyrosine 164 is a binding site for substrate. The Zn(2+) site is built by histidine 192 and histidine 248. Lysine 256 is subject to N6-succinyllysine. Aspartate 326 lines the Zn(2+) pocket. Substrate is bound at residue asparagine 347. Threonine 510 carries the phosphothreonine modification.

This sequence belongs to the metallo-dependent hydrolases superfamily. Hydantoinase/dihydropyrimidinase family. Homotetramer. Zn(2+) is required as a cofactor. Post-translationally, carboxylation allows a single lysine to coordinate two zinc ions.

The enzyme catalyses 5,6-dihydrouracil + H2O = 3-(carbamoylamino)propanoate + H(+). In terms of biological role, catalyzes the second step of the reductive pyrimidine degradation, the reversible hydrolytic ring opening of dihydropyrimidines. Can catalyze the ring opening of 5,6-dihydrouracil to N-carbamyl-alanine and of 5,6-dihydrothymine to N-carbamyl-amino isobutyrate. This Rattus norvegicus (Rat) protein is Dihydropyrimidinase (Dpys).